Here is a 249-residue protein sequence, read N- to C-terminus: MLKGAWQARIVTLFPEAFPGTLGLSLTGKALEMGLWSLETIDLRPFGEGRHRNVDDNPAGGGAGMVLRADIVARALDAASVGTPSERSRWPVVYLSPRGKPFSQAMARDWAGAEGLTLLCGRFEGVDQRVLDAYAVEEVSLGDFVLTGGEIAAQALIDATVRLIPRVLGNHASTEEESFSEGLLEFPQYTRPTVWQDRTIPEVLLSGHHANIARWRRAEAERLTKERRPDLWRAYCAARGRDPDEDREL.

Residues G121 and 141 to 146 each bind S-adenosyl-L-methionine; that span reads LGDFVL.

This sequence belongs to the RNA methyltransferase TrmD family. As to quaternary structure, homodimer.

Its subcellular location is the cytoplasm. The catalysed reaction is guanosine(37) in tRNA + S-adenosyl-L-methionine = N(1)-methylguanosine(37) in tRNA + S-adenosyl-L-homocysteine + H(+). Its function is as follows. Specifically methylates guanosine-37 in various tRNAs. The polypeptide is tRNA (guanine-N(1)-)-methyltransferase (Cereibacter sphaeroides (strain KD131 / KCTC 12085) (Rhodobacter sphaeroides)).